A 177-amino-acid polypeptide reads, in one-letter code: VKSTNLMAFVATKMLERQEDLDTCTEMQVEKMKTSTKARLRTESSFAPRTWEDAIKDEILRRSVDTSSLDKWPELKQELENVSDALKADSLWLPMKSLSLYSKVSNQELSSIPIGEMKHQILTRLKLICSRLEKLDLNLSKAVLGIQNSEDLILIIYNRDVCKNTILMIKSLCNSLI.

2 short sequence motifs (nuclear export signal) span residues 91–100 (LWLPMKSLSL) and 117–127 (MKHQILTRLKL).

Binds M1 protein. May interact with human nucleoporins and exportin XPO1/CRM1.

The protein localises to the virion. It localises to the host nucleus. Its function is as follows. Mediates the nuclear export of encapsidated genomic RNAs (ribonucleoproteins, RNPs). Acts as an adapter between viral RNPs complexes and the nuclear export machinery of the cell. Possesses no intrinsic RNA-binding activity, but includes a C-terminal M1-binding domain. This domain is believed to allow recognition of RNPs to which the M1 protein is bound. Because the M1 protein is not available in large quantities until the later stages of infection, such an indirect recognition mechanism probably ensures that genomic RNPs are not exported from the nucleus before sufficient quantities of viral mRNA and progeny genomic RNA have been synthesized. Furthermore, the RNPs enters the cytoplasm only when they have associated with the M1 protein that is necessary to guide them to the plasma membrane. May down-regulate viral RNA synthesis when overproduced. The sequence is that of Nuclear export protein (NS) from Influenza C virus (strain C/Great lakes/1167/1954).